The chain runs to 336 residues: Dihydroorotate dehydrogenase (quinone) (336 aa).

FMN contacts are provided by residues 62–66 and threonine 86; that span reads AGLDK. A substrate-binding site is contributed by lysine 66. 111 to 115 lines the substrate pocket; that stretch reads NRMGF. FMN contacts are provided by asparagine 139 and asparagine 172. Substrate is bound at residue asparagine 172. The Nucleophile role is filled by serine 175. Asparagine 177 lines the substrate pocket. FMN is bound by residues lysine 217 and threonine 245. Residue 246-247 participates in substrate binding; it reads NT. Residues glycine 268, glycine 297, and 318–319 contribute to the FMN site; that span reads YS.

This sequence belongs to the dihydroorotate dehydrogenase family. Type 2 subfamily. Monomer. FMN serves as cofactor.

Its subcellular location is the cell membrane. It catalyses the reaction (S)-dihydroorotate + a quinone = orotate + a quinol. Its pathway is pyrimidine metabolism; UMP biosynthesis via de novo pathway; orotate from (S)-dihydroorotate (quinone route): step 1/1. Its function is as follows. Catalyzes the conversion of dihydroorotate to orotate with quinone as electron acceptor. This is Dihydroorotate dehydrogenase (quinone) from Serratia proteamaculans (strain 568).